The chain runs to 431 residues: MQLNSNGWHVDDHIVVAVSTGIDSMCLLYQLLNDYKDSYRKLTCLHVNHGVRSASIEEARFLEAYCERHHIDLHIKKLDLSHSLDRNNSIQNEARIKRYEWFDEMMNVLEADVLLTAHHLDDQLETIMYRIFNGKSTRNKLGFDELSKRKGYQIYRPLLAVSKKEIKQFQERYHIPYFEDESNKDNKYIRNDIRNRIIPAIDENNQLKVSHLLKLKQWHDEQYDILQYSAKQFIQEFVKFDEQSKYLEVSRQAFNNLPNSLKMVVLDCLLSKYYELFNISAKTYEEWFKQFSSKKAQFSINLTDKWIIQIAYGKLIIMAKNNGDTYFRVQTIKKPGNYFFNKYRLEIHSNLPKCLFPLTVRTRQSGDTFKLNGRDGYKKVNRLFIDCKVPQWVRDQMPIVLDKQQRIIAVGDLYQQQTIKKWIIISKNGDE.

Ser19–Ser24 serves as a coordination point for ATP.

This sequence belongs to the tRNA(Ile)-lysidine synthase family.

It localises to the cytoplasm. It catalyses the reaction cytidine(34) in tRNA(Ile2) + L-lysine + ATP = lysidine(34) in tRNA(Ile2) + AMP + diphosphate + H(+). In terms of biological role, ligates lysine onto the cytidine present at position 34 of the AUA codon-specific tRNA(Ile) that contains the anticodon CAU, in an ATP-dependent manner. Cytidine is converted to lysidine, thus changing the amino acid specificity of the tRNA from methionine to isoleucine. This Staphylococcus aureus (strain Mu50 / ATCC 700699) protein is tRNA(Ile)-lysidine synthase.